The sequence spans 712 residues: MEENPTLESEAWGSSRGWLAPREARGAPCSSPGPSLSSVLNELPSAATLRYRDPGVLPWGALEEEEEDGGRSRKAFTEVTQTELQDPHPSRELPWPMQARRAHRQRNASRDQVVYGSGTKTDRWARLLRRSKEKTKEGLRSLQPWAWTLKRIGGQFGAGTESYFSLLRFLLLLNVLASVLMACMTLLPTWLGGAPPGPPGPDISSPCGSYNPHSQGLVTFATQLFNLLSGEGYLEWSPLFYGFYPPRPRLAVTYLCWAFAVGLICLLLILHRSVSGLKQTLLAESEALTSYSHRVFSAWDFGLCGDVHVRLRQRIILYELKVELEETVVRRQAAVRTLGQQARVWLVRVLLNLLVVALLGAAFYGVYWATGCTVELQEMPLVQELPLLKLGVNYLPSIFIAGVNFVLPPVFKLIAPLEGYTRSRQIVFILLRTVFLRLASLVVLLFSLWNQITCGGDSEAEDCKTCGYNYKQLPCWETVLGQEMYKLLLFDLLTVLAVALLIQFPRKLLCGLCPGALGRLAGTQEFQVPDEVLGLIYAQTVVWVGSFFCPLLPLLNTVKFLLLFYLKKLTLFSTCSPAARTFRASAANFFFPLVLLLGLAISSVPLLYSIFLIPPSKLCGPFRGQSSIWAQIPESISSLPETTQNFLFFLGTQAFAVPLLLISSILMAYTVALANSYGRLISELKRQRQTEAQNKVFLARRAVALTSTKPAL.

Residues 1 to 39 form a disordered region; sequence MEENPTLESEAWGSSRGWLAPREARGAPCSSPGPSLSSV. Topologically, residues 1–168 are extracellular; the sequence is MEENPTLESE…GTESYFSLLR (168 aa). N-linked (GlcNAc...) asparagine glycosylation occurs at asparagine 107. The chain crosses the membrane as a helical span at residues 169 to 189; that stretch reads FLLLLNVLASVLMACMTLLPT. Residues 190 to 249 are Cytoplasmic-facing; sequence WLGGAPPGPPGPDISSPCGSYNPHSQGLVTFATQLFNLLSGEGYLEWSPLFYGFYPPRPR. Residues 250-270 form a helical membrane-spanning segment; that stretch reads LAVTYLCWAFAVGLICLLLIL. Over 271–348 the chain is Extracellular; the sequence is HRSVSGLKQT…GQQARVWLVR (78 aa). Residues 349–369 form a helical membrane-spanning segment; the sequence is VLLNLLVVALLGAAFYGVYWA. Topologically, residues 370-394 are cytoplasmic; that stretch reads TGCTVELQEMPLVQELPLLKLGVNY. Residues 395–415 form a helical membrane-spanning segment; the sequence is LPSIFIAGVNFVLPPVFKLIA. Topologically, residues 416–425 are extracellular; sequence PLEGYTRSRQ. A helical transmembrane segment spans residues 426–446; that stretch reads IVFILLRTVFLRLASLVVLLF. Residues 447 to 483 are Cytoplasmic-facing; it reads SLWNQITCGGDSEAEDCKTCGYNYKQLPCWETVLGQE. A helical transmembrane segment spans residues 484–504; that stretch reads MYKLLLFDLLTVLAVALLIQF. Residues 505-542 are Extracellular-facing; it reads PRKLLCGLCPGALGRLAGTQEFQVPDEVLGLIYAQTVV. The helical transmembrane segment at 543-565 threads the bilayer; it reads WVGSFFCPLLPLLNTVKFLLLFY. Residues 566–592 lie on the Cytoplasmic side of the membrane; it reads LKKLTLFSTCSPAARTFRASAANFFFP. Residues 593 to 613 traverse the membrane as a helical segment; it reads LVLLLGLAISSVPLLYSIFLI. Over 614–654 the chain is Extracellular; sequence PPSKLCGPFRGQSSIWAQIPESISSLPETTQNFLFFLGTQA. Residues 655–677 form a helical membrane-spanning segment; the sequence is FAVPLLLISSILMAYTVALANSY. The Cytoplasmic portion of the chain corresponds to 678 to 712; that stretch reads GRLISELKRQRQTEAQNKVFLARRAVALTSTKPAL.

Belongs to the TMC family.

The protein resides in the membrane. It catalyses the reaction chloride(in) = chloride(out). Its function is as follows. Voltage-gated chloride channel involved in high-concentration salt taste sensation. Depolarization induced by high NaCl concentration may trigger the activation of TMC4-mediated chloride influx into taste bud cells, helping the return to resting potential. Also allows permeation of organic anions including gluconate, but their current amplitudes at positive potentials are less than that of chloride. Involved in pH and temperature-dependent modulation of salty taste. The chain is Voltage-gated chloride channel TMC4 from Homo sapiens (Human).